The sequence spans 633 residues: Probable potassium transport system protein Kup 2 (633 aa).

The next 12 helical transmembrane spans lie at 18–38 (FLAM…TSPL), 61–81 (LISL…VLFL), 109–129 (LMFM…MITP), 145–165 (PAFH…LFAV), 173–193 (VSIF…AAGV), 211–231 (AVTF…AVFL), 255–275 (WFAV…ALVL), 287–307 (LMFP…ATII), 345–365 (IYLP…MFMF), 371–391 (LATA…VLAF), 405–425 (ATAV…ANLF), and 427–447 (IHDG…TMWT).

The protein belongs to the HAK/KUP transporter (TC 2.A.72) family.

The protein resides in the cell inner membrane. It carries out the reaction K(+)(in) + H(+)(in) = K(+)(out) + H(+)(out). Its function is as follows. Transport of potassium into the cell. Likely operates as a K(+):H(+) symporter. The polypeptide is Probable potassium transport system protein Kup 2 (Sinorhizobium medicae (strain WSM419) (Ensifer medicae)).